We begin with the raw amino-acid sequence, 55 residues long: Potassium channel toxin alpha-KTX 12 Sp2 (55 aa).

The N-terminal stretch at 1 to 18 is a signal peptide; the sequence is MRLAIILLLMTTIVLTIG. 3 disulfide bridges follow: Cys26/Cys46, Cys32/Cys51, and Cys36/Cys53.

This sequence belongs to the short scorpion toxin superfamily. Potassium channel inhibitor family. Alpha-KTx 12 subfamily. Expressed by the venom gland.

The protein resides in the secreted. In terms of biological role, blocks mouse voltage-gated potassium channels Kv1.3/KCNA3 (IC(50)=0.3-30 nM), when the channel is expressed in Jurkat T cells or in HEK293 cells. Also shows a weaker inhibition on mKv1.2/KCNA2 (IC(50)=56.9 nM) and mKv1.1/KCNA1 (IC(50)=485 nM). Probably through the inhibition of both Kv1.2/KCNA2 and Kv1.3/KCNA3, the toxin also reduces the free calcium concentration in Jurkat T cells, inhibits the activation of Jurkat T cells and reduces the release of inflammatory cytokines interleukin-2, showing a strong immunosuppressant effect. The sequence is that of Potassium channel toxin alpha-KTX 12 Sp2 from Scorpiops pococki (Scorpion).